Here is a 916-residue protein sequence, read N- to C-terminus: Protein translocase subunit SecA (916 aa).

Residues Q87, 105–109, and D512 contribute to the ATP site; that span reads GEGKT. The tract at residues 857-916 is disordered; that stretch reads QHAEAPSMEQAVAGEEEELPEGPAPVVPLEPVRNEQKIGRNEPCPCGSGKKYKHCHGQLD. Zn(2+)-binding residues include C900, C902, C911, and H912. Residues 906–916 show a composition bias toward basic residues; the sequence is KKYKHCHGQLD.

The protein belongs to the SecA family. Monomer and homodimer. Part of the essential Sec protein translocation apparatus which comprises SecA, SecYEG and auxiliary proteins SecDF-YajC and YidC. The cofactor is Zn(2+).

It localises to the cell inner membrane. The protein resides in the cytoplasm. The catalysed reaction is ATP + H2O + cellular proteinSide 1 = ADP + phosphate + cellular proteinSide 2.. Its function is as follows. Part of the Sec protein translocase complex. Interacts with the SecYEG preprotein conducting channel. Has a central role in coupling the hydrolysis of ATP to the transfer of proteins into and across the cell membrane, serving both as a receptor for the preprotein-SecB complex and as an ATP-driven molecular motor driving the stepwise translocation of polypeptide chains across the membrane. The protein is Protein translocase subunit SecA of Pseudomonas aeruginosa (strain LESB58).